Consider the following 290-residue polypeptide: Protein translocase subunit SecF (290 aa).

The next 6 helical transmembrane spans lie at 15-35 (VFMILSLLFVIIGMYFFFTKG), 131-151 (KAILAAVLAIIVMLVYITVRF), 156-176 (AISAIINEAFVLLATISIFAI), 184-204 (SFIAAILTLLGYAINDNIIVF), 234-256 (TLYTVITTLLAITPLLIWGGVVL), and 260-282 (ILAIYLGIIIGTYSTIYIASAIL).

The protein belongs to the SecD/SecF family. SecF subfamily. In terms of assembly, forms a complex with SecD. Part of the essential Sec protein translocation apparatus which comprises SecA, SecYEG and auxiliary proteins SecDF. Other proteins may also be involved.

The protein resides in the cell inner membrane. Its function is as follows. Part of the Sec protein translocase complex. Interacts with the SecYEG preprotein conducting channel. SecDF uses the proton motive force (PMF) to complete protein translocation after the ATP-dependent function of SecA. The protein is Protein translocase subunit SecF of Dictyoglomus turgidum (strain DSM 6724 / Z-1310).